The sequence spans 316 residues: Cytochrome c oxidase assembly protein COX18, mitochondrial (316 aa).

Residues 164 to 184 (WKNALLPMVQIPLWVTVSMGI) form a helical membrane-spanning segment. The Mitochondrial matrix segment spans residues 185 to 213 (RTLTETQLIESFYPSWFSALGFSSFDLSS). The helical transmembrane segment at 214–234 (PLVAMPLLAPILVGTLAVLNV) threads the bilayer. The Mitochondrial intermembrane portion of the chain corresponds to 235–274 (ELNGRLMFSSSLSSQGIKTISRNSTRVQEAMTSILNVSRL). The chain crosses the membrane as a helical span at residues 275–295 (GCVVMLAMSSQAPFLLSLYWI). The Mitochondrial matrix portion of the chain corresponds to 296 to 316 (SSQLFSLVQNIILNWIYPYQR).

This sequence belongs to the OXA1/ALB3/YidC family. Interacts with PNT1 and MSS2.

It localises to the mitochondrion inner membrane. Its function is as follows. Required for the insertion of integral membrane proteins into the mitochondrial inner membrane. Essential for the activity and assembly of cytochrome c oxidase. Plays a central role in the translocation and export of the C-terminal part of the COX2 protein into the mitochondrial intermembrane space. The polypeptide is Cytochrome c oxidase assembly protein COX18, mitochondrial (COX18) (Saccharomyces cerevisiae (strain ATCC 204508 / S288c) (Baker's yeast)).